A 140-amino-acid chain; its full sequence is UPF0654 protein C22G7.11c (140 aa).

Disordered stretches follow at residues 1 to 88 (MPDP…DPMK) and 110 to 140 (YKAT…ETQA). Residues 24-33 (AKERAEDYIE) are compositionally biased toward basic and acidic residues. A compositionally biased stretch (polar residues) spans 34-44 (SHSSGQETGDY). Residues 54–71 (DYEDLGDYDEDADFDNEE) are compositionally biased toward acidic residues.

Belongs to the UPF0654 (con-6) family.

This chain is UPF0654 protein C22G7.11c, found in Schizosaccharomyces pombe (strain 972 / ATCC 24843) (Fission yeast).